The primary structure comprises 184 residues: UPF0149 protein PSEEN5316 (184 aa).

This sequence belongs to the UPF0149 family.

In Pseudomonas entomophila (strain L48), this protein is UPF0149 protein PSEEN5316.